Here is a 333-residue protein sequence, read N- to C-terminus: Biotin synthase (333 aa).

The 227-residue stretch at 47-273 (YYGNKVKLNM…MNPTKEIRIA (227 aa)) folds into the Radical SAM core domain. [4Fe-4S] cluster is bound by residues C65, C69, and C72. The [2Fe-2S] cluster site is built by C109, C141, C201, and R271.

This sequence belongs to the radical SAM superfamily. Biotin synthase family. In terms of assembly, homodimer. Requires [4Fe-4S] cluster as cofactor. [2Fe-2S] cluster is required as a cofactor.

It catalyses the reaction (4R,5S)-dethiobiotin + (sulfur carrier)-SH + 2 reduced [2Fe-2S]-[ferredoxin] + 2 S-adenosyl-L-methionine = (sulfur carrier)-H + biotin + 2 5'-deoxyadenosine + 2 L-methionine + 2 oxidized [2Fe-2S]-[ferredoxin]. It functions in the pathway cofactor biosynthesis; biotin biosynthesis; biotin from 7,8-diaminononanoate: step 2/2. In terms of biological role, catalyzes the conversion of dethiobiotin (DTB) to biotin by the insertion of a sulfur atom into dethiobiotin via a radical-based mechanism. The chain is Biotin synthase from Geobacillus kaustophilus (strain HTA426).